Reading from the N-terminus, the 532-residue chain is Phosphoenolpyruvate carboxykinase (ATP) (532 aa).

The substrate site is built by arginine 60, tyrosine 194, and lysine 200. Residues lysine 200, histidine 219, and 237–245 (GLSGTGKTT) contribute to the ATP site. 2 residues coordinate Mn(2+): lysine 200 and histidine 219. Aspartate 258 contacts Mn(2+). Residues glutamate 286, arginine 324, and threonine 449 each contribute to the ATP site. A substrate-binding site is contributed by arginine 324.

This sequence belongs to the phosphoenolpyruvate carboxykinase (ATP) family. It depends on Mn(2+) as a cofactor.

It localises to the cytoplasm. The catalysed reaction is oxaloacetate + ATP = phosphoenolpyruvate + ADP + CO2. The protein operates within carbohydrate biosynthesis; gluconeogenesis. Functionally, involved in the gluconeogenesis. Catalyzes the conversion of oxaloacetate (OAA) to phosphoenolpyruvate (PEP) through direct phosphoryl transfer between the nucleoside triphosphate and OAA. In Ruegeria sp. (strain TM1040) (Silicibacter sp.), this protein is Phosphoenolpyruvate carboxykinase (ATP).